A 764-amino-acid polypeptide reads, in one-letter code: 5-methyltetrahydropteroyltriglutamate--homocysteine methyltransferase (764 aa).

5-methyltetrahydropteroyltri-L-glutamate-binding positions include 17-20 (RELK) and Lys117. Residues 437–439 (IGS) and Glu490 contribute to the L-homocysteine site. L-methionine-binding positions include 437 to 439 (IGS) and Glu490. 5-methyltetrahydropteroyltri-L-glutamate contacts are provided by residues 521–522 (RC) and Trp567. An L-homocysteine-binding site is contributed by Asp605. Asp605 is an L-methionine binding site. Glu611 serves as a coordination point for 5-methyltetrahydropteroyltri-L-glutamate. Zn(2+)-binding residues include His647, Cys649, and Glu671. His701 (proton donor) is an active-site residue. A Zn(2+)-binding site is contributed by Cys733.

It belongs to the vitamin-B12 independent methionine synthase family. Zn(2+) serves as cofactor.

The enzyme catalyses 5-methyltetrahydropteroyltri-L-glutamate + L-homocysteine = tetrahydropteroyltri-L-glutamate + L-methionine. It participates in amino-acid biosynthesis; L-methionine biosynthesis via de novo pathway; L-methionine from L-homocysteine (MetE route): step 1/1. In terms of biological role, catalyzes the transfer of a methyl group from 5-methyltetrahydrofolate to homocysteine resulting in methionine formation. The chain is 5-methyltetrahydropteroyltriglutamate--homocysteine methyltransferase from Blochmanniella pennsylvanica (strain BPEN).